The sequence spans 139 residues: Large ribosomal subunit protein uL16 (139 aa).

The protein belongs to the universal ribosomal protein uL16 family. As to quaternary structure, part of the 50S ribosomal subunit.

Binds 23S rRNA and is also seen to make contacts with the A and possibly P site tRNAs. This chain is Large ribosomal subunit protein uL16, found in Chlorobium phaeobacteroides (strain DSM 266 / SMG 266 / 2430).